We begin with the raw amino-acid sequence, 529 residues long: Tyrosinase (529 aa).

An N-terminal signal peptide occupies residues 1–18; the sequence is MLLAALCCLLWSFRTSAG. Residues 19–472 are Lumenal-facing; sequence HFPRACASSK…IKPFLEQASR (454 aa). 3 N-linked (GlcNAc...) asparagine glycosylation sites follow: Asn86, Asn111, and Asn161. His180, His202, and His211 together coordinate Cu cation. Asn230 and Asn336 each carry an N-linked (GlcNAc...) asparagine glycan. His362 and His366 together coordinate Cu cation. The N-linked (GlcNAc...) asparagine glycan is linked to Asn370. Residue His389 coordinates Cu cation. Residues 473-495 form a helical membrane-spanning segment; sequence IWPWLIGAAVVGSVLTAVLGRLT. Residues 496 to 529 lie on the Cytoplasmic side of the membrane; sequence SLLCRRKRKQLREERQPLLMEKEDYHSLLYQTHV.

The protein belongs to the tyrosinase family. In terms of assembly, forms an OPN3-dependent complex with DCT in response to blue light in melanocytes. Cu(2+) is required as a cofactor. Glycosylated.

It localises to the melanosome membrane. The protein resides in the melanosome. The enzyme catalyses 2 L-dopa + O2 = 2 L-dopaquinone + 2 H2O. It carries out the reaction L-tyrosine + O2 = L-dopaquinone + H2O. The catalysed reaction is 2 5,6-dihydroxyindole-2-carboxylate + O2 = 2 indole-5,6-quinone-2-carboxylate + 2 H2O. This is a copper-containing oxidase that functions in the formation of pigments such as melanins and other polyphenolic compounds. Catalyzes the initial and rate limiting step in the cascade of reactions leading to melanin production from tyrosine. In addition to hydroxylating tyrosine to DOPA (3,4-dihydroxyphenylalanine), also catalyzes the oxidation of DOPA to DOPA-quinone, and possibly the oxidation of DHI (5,6-dihydroxyindole) to indole-5,6 quinone. The protein is Tyrosinase (TYR) of Felis catus (Cat).